Here is an 876-residue protein sequence, read N- to C-terminus: Phosphoenolpyruvate carboxylase (876 aa).

Residues His138 and Lys543 contribute to the active site.

Belongs to the PEPCase type 1 family. It depends on Mg(2+) as a cofactor.

The enzyme catalyses oxaloacetate + phosphate = phosphoenolpyruvate + hydrogencarbonate. Forms oxaloacetate, a four-carbon dicarboxylic acid source for the tricarboxylic acid cycle. This Aliivibrio salmonicida (strain LFI1238) (Vibrio salmonicida (strain LFI1238)) protein is Phosphoenolpyruvate carboxylase.